A 489-amino-acid polypeptide reads, in one-letter code: Beta-dihydromenaquinone-9 omega-hydroxylase (489 aa).

Position 435 (C435) interacts with heme.

This sequence belongs to the cytochrome P450 family. Requires heme as cofactor.

The protein localises to the cytoplasm. The catalysed reaction is beta-dihydromenaquinone-9 + 2 reduced [2Fe-2S]-[ferredoxin] + O2 + 2 H(+) = omega-hydroxy-beta-dihydromenaquinone-9 + 2 oxidized [2Fe-2S]-[ferredoxin] + H2O. Involved in the biosynthesis of sulfomenaquinone (SMK, initially named S881 on the basis of its mass), which is localized in the outer envelope of M.bovis and negatively regulates its virulence. Catalyzes the hydroxylation of beta-dihydromenaquinone-9, leading to the formation of omega-hydroxy-beta-dihydromenaquinone-9. The sequence is that of Beta-dihydromenaquinone-9 omega-hydroxylase (cyp128) from Mycobacterium bovis (strain ATCC BAA-935 / AF2122/97).